The primary structure comprises 163 residues: Transcriptional repressor NrdR (163 aa).

A zinc finger lies at C3–C34. One can recognise an ATP-cone domain in the interval L49 to E139.

Belongs to the NrdR family. Requires Zn(2+) as cofactor.

Negatively regulates transcription of bacterial ribonucleotide reductase nrd genes and operons by binding to NrdR-boxes. This is Transcriptional repressor NrdR from Akkermansia muciniphila (strain ATCC BAA-835 / DSM 22959 / JCM 33894 / BCRC 81048 / CCUG 64013 / CIP 107961 / Muc).